The primary structure comprises 301 residues: MDPQQIKAALGSGLLSFPVTPFDAENRFAAAPYQKHVEWLSGFDAPVLFAAGGTGEFFSLTPDEIPAIVRAAKESAGKTAIVSGCGYGTEIARGIARSVEAAGGDGILLLPHYLIDAPQEGLYAHVRAVCQATGMGVMVYNRDNAVLQADTLARLCDDCPNLVGFKDGTGDIGLVRQITAKMGDRLTYLGGMPTAELFAEAYLGASFTTYSSAVFNFVPALANKFYAALRAGDRATCESILNSFFYPFMELRSRRKGYAVAAVKAGVRLVGFDAGPVRAPLSDLTGEEEKILEALIDAHRE.

This sequence belongs to the DapA family.

It carries out the reaction 5-dehydro-4-deoxy-D-glucarate + H(+) = 2,5-dioxopentanoate + CO2 + H2O. Its pathway is carbohydrate acid metabolism; D-glucarate degradation; 2,5-dioxopentanoate from D-glucarate: step 2/2. This chain is Probable 5-dehydro-4-deoxyglucarate dehydratase, found in Cereibacter sphaeroides (strain KD131 / KCTC 12085) (Rhodobacter sphaeroides).